The primary structure comprises 160 residues: Cytochrome b6-f complex subunit 4 (160 aa).

Transmembrane regions (helical) follow at residues 36–56 (LLYV…GLAI), 95–115 (LLGV…PFIE), and 131–151 (TIFL…TMPI).

Belongs to the cytochrome b family. PetD subfamily. In terms of assembly, the 4 large subunits of the cytochrome b6-f complex are cytochrome b6, subunit IV (17 kDa polypeptide, petD), cytochrome f and the Rieske protein, while the 4 small subunits are petG, petL, petM and petN. The complex functions as a dimer.

It is found in the plastid. The protein localises to the chloroplast thylakoid membrane. In terms of biological role, component of the cytochrome b6-f complex, which mediates electron transfer between photosystem II (PSII) and photosystem I (PSI), cyclic electron flow around PSI, and state transitions. In Porphyra purpurea (Red seaweed), this protein is Cytochrome b6-f complex subunit 4.